Reading from the N-terminus, the 262-residue chain is ATP synthase subunit a (262 aa).

Transmembrane regions (helical) follow at residues 26-46, 86-106, 130-150, 204-226, and 240-260; these read VHIDTLFFSILAAVIFLFVFS, VAPLALTIFCWVFIMNAIDLI, DISATLGMSICVFFLILFYTI, LIFILIAVMYSANMAIAALGIPL, and LQAFIFMMLTVVYLSIAYNKA.

The protein belongs to the ATPase A chain family. As to quaternary structure, F-type ATPases have 2 components, CF(1) - the catalytic core - and CF(0) - the membrane proton channel. CF(1) has five subunits: alpha(3), beta(3), gamma(1), delta(1), epsilon(1). CF(0) has three main subunits: a(1), b(2) and c(9-12). The alpha and beta chains form an alternating ring which encloses part of the gamma chain. CF(1) is attached to CF(0) by a central stalk formed by the gamma and epsilon chains, while a peripheral stalk is formed by the delta and b chains.

Its subcellular location is the cell inner membrane. In terms of biological role, key component of the proton channel; it plays a direct role in the translocation of protons across the membrane. The protein is ATP synthase subunit a of Haemophilus influenzae (strain PittEE).